A 64-amino-acid polypeptide reads, in one-letter code: Large ribosomal subunit protein bL35 (64 aa).

A disordered region spans residues 1-55 (MPKMKSNKSVAARFKLTGSGQLKRTRPGKRHKLSKRSSQQKRNLSKQPLVDQGQV). Over residues 23–39 (KRTRPGKRHKLSKRSSQ) the composition is skewed to basic residues.

It belongs to the bacterial ribosomal protein bL35 family.

This chain is Large ribosomal subunit protein bL35, found in Chlamydia muridarum (strain MoPn / Nigg).